The primary structure comprises 476 residues: Bifunctional protein HldE (476 aa).

The interval 1–318 (MKVTLPDFRR…ENAIRGRAET (318 aa)) is ribokinase. An ATP-binding site is contributed by 195–198 (NLSE). Residue Asp264 is part of the active site. The interval 344–476 (MTNGIFDILH…IIQSIKNGRG (133 aa)) is cytidylyltransferase.

It in the N-terminal section; belongs to the carbohydrate kinase PfkB family. In the C-terminal section; belongs to the cytidylyltransferase family. In terms of assembly, homodimer.

It carries out the reaction D-glycero-beta-D-manno-heptose 7-phosphate + ATP = D-glycero-beta-D-manno-heptose 1,7-bisphosphate + ADP + H(+). It catalyses the reaction D-glycero-beta-D-manno-heptose 1-phosphate + ATP + H(+) = ADP-D-glycero-beta-D-manno-heptose + diphosphate. The protein operates within nucleotide-sugar biosynthesis; ADP-L-glycero-beta-D-manno-heptose biosynthesis; ADP-L-glycero-beta-D-manno-heptose from D-glycero-beta-D-manno-heptose 7-phosphate: step 1/4. It participates in nucleotide-sugar biosynthesis; ADP-L-glycero-beta-D-manno-heptose biosynthesis; ADP-L-glycero-beta-D-manno-heptose from D-glycero-beta-D-manno-heptose 7-phosphate: step 3/4. Catalyzes the phosphorylation of D-glycero-D-manno-heptose 7-phosphate at the C-1 position to selectively form D-glycero-beta-D-manno-heptose-1,7-bisphosphate. In terms of biological role, catalyzes the ADP transfer from ATP to D-glycero-beta-D-manno-heptose 1-phosphate, yielding ADP-D-glycero-beta-D-manno-heptose. The chain is Bifunctional protein HldE from Yersinia pseudotuberculosis serotype O:1b (strain IP 31758).